We begin with the raw amino-acid sequence, 72 residues long: uncharacterized protein (72 aa).

A disordered region spans residues 52–72 (KGGRQRDEAVGVEELCKQHKE). Residues 55–72 (RQRDEAVGVEELCKQHKE) show a composition bias toward basic and acidic residues.

The protein belongs to the YiiE family.

This is an uncharacterized protein from Escherichia coli O6:H1 (strain CFT073 / ATCC 700928 / UPEC).